Consider the following 232-residue polypeptide: Ferric nitrobindin-like protein (232 aa).

Residues 1–10 (MSENETSKTG) are compositionally biased toward polar residues. The tract at residues 1–33 (MSENETSKTGGNAGVPGSGADAPSLSDSPAISG) is disordered. A GXWXGXG motif is present at residues 85-91 (GVWRGEG).

Belongs to the nitrobindin family.

The protein is Ferric nitrobindin-like protein of Corynebacterium efficiens (strain DSM 44549 / YS-314 / AJ 12310 / JCM 11189 / NBRC 100395).